The primary structure comprises 282 residues: Energy-coupling factor transporter ATP-binding protein EcfA1 (282 aa).

The ABC transporter domain occupies 6–243 (ISFDHVTFTY…VEMLKRIGLD (238 aa)). 40 to 47 (GHNGSGKS) lines the ATP pocket.

It belongs to the ABC transporter superfamily. Energy-coupling factor EcfA family. In terms of assembly, forms a stable energy-coupling factor (ECF) transporter complex composed of 2 membrane-embedded substrate-binding proteins (S component), 2 ATP-binding proteins (A component) and 2 transmembrane proteins (T component).

Its subcellular location is the cell membrane. ATP-binding (A) component of a common energy-coupling factor (ECF) ABC-transporter complex. Unlike classic ABC transporters this ECF transporter provides the energy necessary to transport a number of different substrates. This is Energy-coupling factor transporter ATP-binding protein EcfA1 from Lactobacillus delbrueckii subsp. bulgaricus (strain ATCC BAA-365 / Lb-18).